The primary structure comprises 181 residues: Inner kinetochore subunit MCM16 (181 aa).

Residues 112-171 are a coiled coil; sequence KQLIESRAERDELMSKLIELSSKFPKPTIPPDDSDTAGKQVEVEKENETIQELMIALQIH.

The protein belongs to the CENP-H/MCM16 family. As to quaternary structure, component of the heterotrimeric kinetochore subcomplex CTF3, which consists of CTF3, MCM16 and MCM22. The CTF3 subcomplex is part of a larger constitutive centromere-associated network (CCAN) (also known as central kinetochore CTF19 complex in yeast), which is composed of at least AME1, CHL4, CNN1, CTF3, CTF19, IML3, MCM16, MCM21, MCM22, MHF1, MHF2, MIF2, NKP1, NKP2, OKP1 and WIP1. Interacts with CTF19.

It is found in the nucleus. The protein localises to the chromosome. The protein resides in the centromere. Its subcellular location is the kinetochore. In terms of biological role, component of the kinetochore, a multiprotein complex that assembles on centromeric DNA and attaches chromosomes to spindle microtubules, mediating chromosome segregation and sister chromatid segregation during meiosis and mitosis. Component of the inner kinetochore constitutive centromere-associated network (CCAN), which serves as a structural platform for outer kinetochore assembly. This is Inner kinetochore subunit MCM16 (MCM16) from Saccharomyces cerevisiae (strain ATCC 204508 / S288c) (Baker's yeast).